The primary structure comprises 1116 residues: MYGSARSVGKVEPSSQSPGRSPRLPRSPRLGHRRTNSTGGSSGSSVGGGSGKTLSMENIQSLNAAYATSGPMYLSDHENVGSETPKSTMTLGRSGGRLPYGVRMTAMGSSPNIASSGVASDTIAFGEHHLPPVSMASTVPHSLRQARDNTIMDLQTQLKEVLRENDLLRKDVEVKESKLSSSMNSIKTFWSPELKKERALRKDEASKITIWKEQYRVVQEENQHMQMTIQALQDELRIQRDLNQLFQQDSSSRTGEPCVAELTEENFQRLHAEHERQAKELFLLRKTLEEMELRIETQKQTLNARDESIKKLLEMLQSKGLSAKATEEDHERTRRLAEAEMHVHHLESLLEQKEKENSMLREEMHRRFENAPDSAKTKALQTVIEMKDSKISSMERGLRDLEEEIQMLKSNGALSTEEREEEMKQMEVYRSHSKFMKNKVEQLKEELSSKEAQWEELKKKAAGLQAEIGQVKQELSRKDTELLALQTKLETLTNQFSDSKQHIEVLKESLTAKEQRAAILQTEVDALRLRLEEKETMLNKKTKQIQDMAEEKGTQAGEIHDLKDMLDVKERKVNVLQKKIENLQEQLRDKEKQMSSLKERVKSLQADTTNTDTALTTLEEALAEKERTIERLKEQRDRDEREKQEEIDNYKKDLKDLKEKVSLLQGDLSEKEASLLDLKEHASSLASSGLKKDSRLKTLEIALEQKKEECLKMESQLKKAHEAALEARASPEMSDRIQHLEREITRYKDESSKAQAEVDRLLEILKEVENEKNDKDKKIAELERQVKDQNKKVANLKHKEQVEKKKSAQMLEEARRREDNLNDSSQQLQDSLRKKDDRIEELEEALRESVQITAEREMVLAQEESARTNAEKQVEELLMAMEKVKQELESMKAKLSSTQQSLAEKETHLTNLRAERRKHLEEVLEMKQEALLAAISEKDANIALLELSSSKKKTQEEVAALKREKDRLVQQLKQQTQNRMKLMADNYEDDHFKSSHSNQTNHKPSPDQIIQPLLELDQNRSKLKLYIGHLTTLCHDRDPLILRGLTPPASYNLDDDQAAWENELQKMTRGQLQDELEKGERDNAELQEFANAILQQIADHCPDILEQVVNALEESS.

The tract at residues 1–54 is disordered; that stretch reads MYGSARSVGKVEPSSQSPGRSPRLPRSPRLGHRRTNSTGGSSGSSVGGGSGKTL. K10 carries the N6-acetyllysine modification. The span at 13 to 28 shows a compositional bias: low complexity; that stretch reads PSSQSPGRSPRLPRSP. S17, S21, and S37 each carry phosphoserine. Position 38 is a phosphothreonine (T38). A compositionally biased stretch (gly residues) spans 40-51; the sequence is GSSGSSVGGGSG. S55, S75, and S94 each carry phosphoserine. The stretch at 144–988 forms a coiled coil; it reads RQARDNTIMD…RMKLMADNYE (845 aa). The segment covering 590–602 has biased composition (basic and acidic residues); sequence KEKQMSSLKERVK. Disordered regions lie at residues 590–609 and 814–836; these read KEKQMSSLKERVKSLQADTT and ARRREDNLNDSSQQLQDSLRKKD. S1005 is modified (phosphoserine). T1046 carries the post-translational modification Phosphothreonine. The 63-residue stretch at 1046–1108 folds into the FIP-RBD domain; sequence TPPASYNLDD…DHCPDILEQV (63 aa). Residues 1060-1100 adopt a coiled-coil conformation; that stretch reads WENELQKMTRGQLQDELEKGERDNAELQEFANAILQQIADH.

Part of a complex with CHUK, IKBKB and IKBKG. Interacts with CHUK, IKBKB and IKBKG. The interaction with IKBKG is independent of CHUK and IKBKB. Interacts with NFKBIA. Isoform 4 interacts with PPFIA1, and through its C-terminus with the PDZ domains of RIMS1 and RIMS2. Interacts with ERC2/CAST1. Interacts with the GTB-bound forms of RAB6A isoform 1 and isoform 2 and with RAB6B. The interaction was strongest with RAB6B, followed by RAB6A isoform 2 and weakest with RAB6A isoform 1. Interacts with SDCCAG8. Part of a cortical microtubule stabilization complex (CMSC) composed of KANK1, PPFIA1, PPFIBP1, ERC1/ELKS, PHLDB2/LL5beta, CLASPs, KIF21A and possibly additional interactors; within CMSCs KANK1 and PHLDB2/LL5beta appear to be the core components for targeting of microtubule-binding proteins KIF21A and CLASPs, whereas PPFIA1, PPFIBP1 and ERC1/ELKS serve as scaffolds for protein clustering. Widely expressed. Isoform 2 and isoform 4 are abundantly expressed in brain. Isoform 1 and isoform 3 are predominantly expressed in testis and thyroid, and isoform 1 predominates in other tissues tested.

It localises to the cytoplasm. The protein localises to the cytoskeleton. The protein resides in the microtubule organizing center. Its subcellular location is the centrosome. It is found in the membrane. It localises to the golgi apparatus membrane. The protein localises to the presynaptic cell membrane. The protein resides in the cell projection. Its subcellular location is the podosome. Regulatory subunit of the IKK complex. Probably recruits IkappaBalpha/NFKBIA to the complex. May be involved in the organization of the cytomatrix at the nerve terminals active zone (CAZ) which regulates neurotransmitter release. May be involved in vesicle trafficking at the CAZ. May be involved in Rab-6 regulated endosomes to Golgi transport. The sequence is that of ELKS/Rab6-interacting/CAST family member 1 (ERC1) from Homo sapiens (Human).